The following is a 239-amino-acid chain: MFPLLLVAELVVLSLVTSVKSQETDPLHGSKDQPLFRGADRNDFAIVVSPGAIECFWQFADQMGYLYFSYEVQRILGMSHDRHIVATAHTPQGFLIDTSQDVRGQINFATQETGFYQLCLKNEQNRFSSIQVYLNFGVFYEGPEVDHKQSQRKQLNDTLDAIKDSTQRVENQVFHMWRFYNYARMRKVADFFLLQSNYTYVNWWSTAQSLAIVLSGALQLYFLKRLFTASTTDTKKPRC.

Residues 1-21 form the signal peptide; the sequence is MFPLLLVAELVVLSLVTSVKS. Over 22–200 the chain is Lumenal; that stretch reads QETDPLHGSK…FFLLQSNYTY (179 aa). Positions 53–138 constitute a GOLD domain; it reads IECFWQFADQ…SIQVYLNFGV (86 aa). N156 and N197 each carry an N-linked (GlcNAc...) asparagine glycan. A helical membrane pass occupies residues 201-223; it reads VNWWSTAQSLAIVLSGALQLYFL. Over 224-239 the chain is Cytoplasmic; sequence KRLFTASTTDTKKPRC.

This sequence belongs to the EMP24/GP25L family.

The protein localises to the endoplasmic reticulum membrane. The polypeptide is Transmembrane emp24 domain-containing protein 6 (Tmed6) (Mus musculus (Mouse)).